A 320-amino-acid chain; its full sequence is GPI-specific phospholipase A2-like PGAP3 (320 aa).

The N-terminal stretch at 1 to 20 (MAGLAARLVLLAGAAALASG) is a signal peptide. Topologically, residues 21-98 (SQGDREPVYR…QFHGKWPFSR (78 aa)) are lumenal. Asparagine 40 carries an N-linked (GlcNAc...) asparagine glycan. Residues 99–119 (FLFFQEPASAVASFLNGLASL) traverse the membrane as a helical segment. Residues 120 to 135 (VMLCRYRTFVPASSPM) lie on the Cytoplasmic side of the membrane. The chain crosses the membrane as a helical span at residues 136–156 (YHTCVAFAWVSLNAWFWSTVF). The Lumenal portion of the chain corresponds to 157–169 (HTRDTDLTEKMDY). The helical transmembrane segment at 170-190 (FCASTVILHSIYLCCVRTVGL) threads the bilayer. The Cytoplasmic segment spans residues 191 to 193 (QHP). Residues 194-214 (AVVSAFRALLLLMLTVHVSYL) form a helical membrane-spanning segment. The Lumenal portion of the chain corresponds to 215–224 (SLIRFDYGYN). The helical transmembrane segment at 225-245 (LVANVAIGLVNVVWWLAWCLW) threads the bilayer. Topologically, residues 246-257 (NQRRLPHVRKCV) are cytoplasmic. Residues 258–278 (VVVLLLQGLSLLELLDFPPLF) traverse the membrane as a helical segment. A topological domain (lumenal) is located at residue tryptophan 279. A helical membrane pass occupies residues 280–299 (VLDAHAIWHISTIPVHVLFF). The Cytoplasmic portion of the chain corresponds to 300 to 320 (SFLEDDSLYLLKESEDKFKLD).

It belongs to the PGAP3 family. As to expression, ubiquitously expressed, with highest levels in thyroid and placenta.

Its subcellular location is the golgi apparatus membrane. Its function is as follows. Involved in the fatty acid remodeling steps of GPI-anchor maturation where the unsaturated acyl chain at sn-2 of inositol phosphate is replaced by a saturated stearoyl chain. May catalyze the first step of the fatty acid remodeling, by removing the unsaturated acyl chain at sn-2 of inositol phosphate, generating a lyso-GPI intermediate. The fatty acid remodeling steps is critical for the integration of GPI-APs into lipid rafts. This Homo sapiens (Human) protein is GPI-specific phospholipase A2-like PGAP3.